Consider the following 701-residue polypeptide: Translation factor GUF1, mitochondrial (701 aa).

The N-terminal 29 residues, 1–29, are a transit peptide targeting the mitochondrion; sequence MSCCKGLTPQCVRVRLPRRPALSHPARLY. The span at 23-50 shows a compositional bias: low complexity; the sequence is SHPARLYSSSSSSNSHSSPSRPRLLSRP. The tract at residues 23 to 85 is disordered; the sequence is SHPARLYSSS…RSSHHSSAPM (63 aa). The tr-type G domain occupies 98–283; the sequence is ERYRNFCVIA…AVIEQIPHPT (186 aa). GTP-binding positions include 107–114, 172–176, and 226–229; these read AHVDHGKS, DTPGH, and NKID.

This sequence belongs to the TRAFAC class translation factor GTPase superfamily. Classic translation factor GTPase family. LepA subfamily.

It is found in the mitochondrion inner membrane. It carries out the reaction GTP + H2O = GDP + phosphate + H(+). Promotes mitochondrial protein synthesis. May act as a fidelity factor of the translation reaction, by catalyzing a one-codon backward translocation of tRNAs on improperly translocated ribosomes. Binds to mitochondrial ribosomes in a GTP-dependent manner. The polypeptide is Translation factor GUF1, mitochondrial (Pyricularia oryzae (strain 70-15 / ATCC MYA-4617 / FGSC 8958) (Rice blast fungus)).